The following is a 627-amino-acid chain: Translation factor GUF1, mitochondrial (627 aa).

The transit peptide at Met1 to Tyr16 directs the protein to the mitochondrion. The 182-residue stretch at Glu40–Val221 folds into the tr-type G domain. GTP is bound by residues Ala49–Ser56, Asp114–His118, and Asn168–Asp171.

This sequence belongs to the TRAFAC class translation factor GTPase superfamily. Classic translation factor GTPase family. LepA subfamily.

It localises to the mitochondrion inner membrane. It catalyses the reaction GTP + H2O = GDP + phosphate + H(+). Its function is as follows. Promotes mitochondrial protein synthesis. May act as a fidelity factor of the translation reaction, by catalyzing a one-codon backward translocation of tRNAs on improperly translocated ribosomes. Binds to mitochondrial ribosomes in a GTP-dependent manner. The protein is Translation factor GUF1, mitochondrial of Fusarium vanettenii (strain ATCC MYA-4622 / CBS 123669 / FGSC 9596 / NRRL 45880 / 77-13-4) (Fusarium solani subsp. pisi).